A 366-amino-acid chain; its full sequence is NADH-quinone oxidoreductase subunit D (366 aa).

The protein belongs to the complex I 49 kDa subunit family. NDH-1 is composed of 14 different subunits. Subunits NuoB, C, D, E, F, and G constitute the peripheral sector of the complex.

Its subcellular location is the cell membrane. It catalyses the reaction a quinone + NADH + 5 H(+)(in) = a quinol + NAD(+) + 4 H(+)(out). NDH-1 shuttles electrons from NADH, via FMN and iron-sulfur (Fe-S) centers, to quinones in the respiratory chain. The immediate electron acceptor for the enzyme in this species is believed to be a menaquinone. Couples the redox reaction to proton translocation (for every two electrons transferred, four hydrogen ions are translocated across the cytoplasmic membrane), and thus conserves the redox energy in a proton gradient. This Bacillus cereus (strain ZK / E33L) protein is NADH-quinone oxidoreductase subunit D.